A 339-amino-acid polypeptide reads, in one-letter code: MSTVHEILCKLSLEGDHSTPPSAYGSVKAYTNFDAERDALNIETAIKTKGVDEVTIVNILTNRSNEQRQDIAFAYQRRTKKELASALKSALSGHLETVILGLLKTPAQYDASELKASMKGLGTDEDSLIEIICSRTNQELQEINRVYKEMYKTDLEKDIVSDTSGDFRKLMVALAKGRRAEDGSVIDYELIDQDARDLYDAGVKRKGTDVPKWISIMTERSVCHLQKVFERYKSYSPYDMLESIKKEVKGDLENAFLNLVQCIQNKPLYFADRLYDSMKGKGTRDKVLIRIMVSRSEVDMLKIRSEFKKKYGKSLYYYIQQDTKGDYQKALLYLCGGDD.

At Ser2 the chain carries N-acetylserine. The tract at residues 2–24 is S100A10-binding site; it reads STVHEILCKLSLEGDHSTPPSAY. Tyr24 is subject to Phosphotyrosine; by SRC. At Ser26 the chain carries Phosphoserine; by PKC. Annexin repeat units lie at residues 33–104 and 105–176; these read FDAE…GLLK and TPAQ…ALAK. Position 49 is an N6-acetyllysine; alternate (Lys49). Lys49 is covalently cross-linked (Glycyl lysine isopeptide (Lys-Gly) (interchain with G-Cter in SUMO1); alternate). A Glycyl lysine isopeptide (Lys-Gly) (interchain with G-Cter in SUMO2); alternate cross-link involves residue Lys49. Position 152 is an N6-acetyllysine (Lys152). A Phosphoserine modification is found at Ser184. Annexin repeat units lie at residues 189–261 and 265–336; these read ELID…NLVQ and NKPL…YLCG. Position 199 is a phosphotyrosine (Tyr199). Position 227 is an N6-acetyllysine (Lys227).

This sequence belongs to the annexin family. As to quaternary structure, heterotetramer containing 2 light chains of S100A10/p11 and 2 heavy chains of ANXA2/p36. Interacts with ATP1B1. Interacts with DYSF. Interacts with COCH. Interacts (via repeat Annexin 1) with PCSK9 (via the C-terminal domain); the interaction inhibits the degradation of LDLR. Interacts with CEACAM1 (via the cytoplasmic domain); this interaction is regulated by phosphorylation of CEACAM1. Interacts with APPL2 and APPL1; targets APPL2 to endosomes and acting in parallel to RAB5A. Interacts with S100A4. May interact with UBAP2. Interacts with PLEKHG4B; this interaction is required for PLEKHG4B localization to cell-cell adhesions. Post-translationally, ISGylated.

It localises to the secreted. Its subcellular location is the extracellular space. The protein resides in the extracellular matrix. It is found in the basement membrane. The protein localises to the melanosome. Functionally, calcium-regulated membrane-binding protein whose affinity for calcium is greatly enhanced by anionic phospholipids. It binds two calcium ions with high affinity. May be involved in heat-stress response. Inhibits PCSK9-enhanced LDLR degradation, probably reduces PCSK9 protein levels via a translational mechanism but also competes with LDLR for binding with PCSK9. Binds to endosomes damaged by phagocytosis of particulate wear debris and participates in endosomal membrane stabilization, thereby limiting NLRP3 inflammasome activation. Required for endothelial cell surface plasmin generation and may support fibrinolytic surveillance and neoangiogenesis. The polypeptide is Annexin A2 (ANXA2) (Bos taurus (Bovine)).